The chain runs to 166 residues: CDP-archaeol synthase (166 aa).

Helical transmembrane passes span 42 to 62 (LVLGILSGVLLGLIQVSVQDA), 73 to 93 (VLSVLLLAVGALAGDMVKSFV), 103 to 123 (AAWPLADQYDLVAGSLLLLLI), and 128 to 148 (FAAVNLTIPVIFWILVLTPLL).

This sequence belongs to the CDP-archaeol synthase family. Requires Mg(2+) as cofactor.

It localises to the cell membrane. It carries out the reaction 2,3-bis-O-(geranylgeranyl)-sn-glycerol 1-phosphate + CTP + H(+) = CDP-2,3-bis-O-(geranylgeranyl)-sn-glycerol + diphosphate. The protein operates within membrane lipid metabolism; glycerophospholipid metabolism. Catalyzes the formation of CDP-2,3-bis-(O-geranylgeranyl)-sn-glycerol (CDP-archaeol) from 2,3-bis-(O-geranylgeranyl)-sn-glycerol 1-phosphate (DGGGP) and CTP. This reaction is the third ether-bond-formation step in the biosynthesis of archaeal membrane lipids. This is CDP-archaeol synthase from Methanosphaerula palustris (strain ATCC BAA-1556 / DSM 19958 / E1-9c).